We begin with the raw amino-acid sequence, 231 residues long: 6-hydroxymethyl-7,8-dihydropterin pyrophosphokinase (231 aa).

It belongs to the archaeal 6-HMPDK family. The cofactor is Mg(2+).

The enzyme catalyses 6-hydroxymethyl-7,8-dihydropterin + ATP = (7,8-dihydropterin-6-yl)methyl diphosphate + AMP + H(+). Catalyzes the transfer of diphosphate from ATP to 6-hydroxymethyl-7,8-dihydropterin (6-HMD), leading to 6-hydroxymethyl-7,8-dihydropterin diphosphate (6-HMDP). To a lesser extent, can also use CTP, UTP, and GTP as the nucleotide triphosphate substrate. The chain is 6-hydroxymethyl-7,8-dihydropterin pyrophosphokinase from Pyrococcus furiosus (strain ATCC 43587 / DSM 3638 / JCM 8422 / Vc1).